Consider the following 948-residue polypeptide: Putative JmjC domain-containing histone demethylation protein 1 (948 aa).

Residues 243–402 form the JmjC domain; that stretch reads VSTTKLAYYV…PQLSIYNLEL (160 aa). Position 294 (Thr294) interacts with substrate. The Fe cation site is built by His297 and Glu299. A substrate-binding site is contributed by Lys314.

This sequence belongs to the JHDM1 histone demethylase family. Fe(2+) serves as cofactor.

The protein resides in the nucleus. The catalysed reaction is N(6),N(6)-dimethyl-L-lysyl(36)-[histone H3] + 2 2-oxoglutarate + 2 O2 = L-lysyl(36)-[histone H3] + 2 formaldehyde + 2 succinate + 2 CO2. In terms of biological role, may be a histone demethylase that specifically demethylates 'Lys-36' of histone H3, thereby playing a central role in histone code. Represses transcriptional silencing by negatively affecting heterochromatin stability. This Schizosaccharomyces pombe (strain 972 / ATCC 24843) (Fission yeast) protein is Putative JmjC domain-containing histone demethylation protein 1 (jhd1).